The following is a 1043-amino-acid chain: Sucrose-phosphate synthase 1 (1043 aa).

The segment covering 95–117 (EEKEAQRLAKRRLEREKGRREAT) has biased composition (basic and acidic residues). The segment at 95 to 127 (EEKEAQRLAKRRLEREKGRREATADMSEEFSEG) is disordered. 4 positions are modified to phosphoserine: Ser121, Ser125, Ser152, and Ser155. The segment at 670–693 (PRHPQWQSDDGGDNSEPESPSDSL) is disordered.

The protein belongs to the glycosyltransferase 1 family. Homodimer or homotetramer. Phosphorylated at Ser-152 upon sucrose supply. Expressed in seeds, stems, rosette leaves, flowers and siliques. Highly expressed in maturing nectaries.

It carries out the reaction beta-D-fructose 6-phosphate + UDP-alpha-D-glucose = sucrose 6(F)-phosphate + UDP + H(+). It participates in glycan biosynthesis; sucrose biosynthesis; sucrose from D-fructose 6-phosphate and UDP-alpha-D-glucose: step 1/2. Activity is regulated by phosphorylation and moderated by concentration of metabolites and light. Functionally, plays a major role in photosynthetic sucrose synthesis by catalyzing the rate-limiting step of sucrose biosynthesis from UDP-glucose and fructose- 6-phosphate. Involved in the regulation of carbon partitioning in the leaves of plants. May regulate the synthesis of sucrose and therefore play a major role as a limiting factor in the export of photoassimilates out of the leaf. Plays a role for sucrose availability that is essential for plant growth and fiber elongation. Required for nectar secretion. The polypeptide is Sucrose-phosphate synthase 1 (SPS1) (Arabidopsis thaliana (Mouse-ear cress)).